The chain runs to 358 residues: 2'-5'-oligoadenylate synthase 1A (358 aa).

The tract at residues 14-61 (DKFIEVYLLPNTSFRDDVKSAINVLCDFLKERCFRDTVHPVRVSKVVK) is interaction with dsRNA. Ser-64 contacts ATP. 3 residues coordinate Mg(2+): Asp-76, Asp-78, and Asp-149. The tract at residues 201 to 211 (QRPTKLKSLIR) is interaction with dsRNA. ATP contacts are provided by Arg-211, Lys-214, and Gln-231.

It belongs to the 2-5A synthase family. In terms of assembly, monomer. Homotetramer. Interacts with OAS1D. Requires Mg(2+) as cofactor.

It localises to the cytoplasm. The protein resides in the mitochondrion. Its subcellular location is the nucleus. It is found in the microsome. The protein localises to the endoplasmic reticulum. It catalyses the reaction 3 ATP = 5'-triphosphoadenylyl-(2'-&gt;5')-adenylyl-(2'-&gt;5')-adenosine + 2 diphosphate. With respect to regulation, produced as a latent enzyme which is activated by dsRNA generated during the course of viral infection. The dsRNA activator must be at least 15 nucleotides long, and no modification of the 2'-hydroxyl group is tolerated. ssRNA or dsDNA do not act as activators. Interferon-induced, dsRNA-activated antiviral enzyme which plays a critical role in cellular innate antiviral response. In addition, it may also play a role in other cellular processes such as apoptosis, cell growth, differentiation and gene regulation. Synthesizes higher oligomers of 2'-5'-oligoadenylates (2-5A) from ATP which then bind to the inactive monomeric form of ribonuclease L (RNase L) leading to its dimerization and subsequent activation. Activation of RNase L leads to degradation of cellular as well as viral RNA, resulting in the inhibition of protein synthesis, thus terminating viral replication. Can mediate the antiviral effect via the classical RNase L-dependent pathway or an alternative antiviral pathway independent of RNase L. In Rattus norvegicus (Rat), this protein is 2'-5'-oligoadenylate synthase 1A (Oas1a).